A 376-amino-acid chain; its full sequence is uncharacterized protein (376 aa).

Residues 24–44 (YLSIISIISVFLLNSSIVYSC) form a helical membrane-spanning segment. His-251 lines the Zn(2+) pocket.

Belongs to the peptidase M23B family. The cofactor is Zn(2+).

It localises to the cell membrane. This is an uncharacterized protein from Buchnera aphidicola subsp. Baizongia pistaciae (strain Bp).